The sequence spans 440 residues: 3-phosphoshikimate 1-carboxyvinyltransferase (440 aa).

Positions 19, 20, and 24 each coordinate 3-phosphoshikimate. Lys-19 is a binding site for phosphoenolpyruvate. Residues Gly-92 and Arg-121 each coordinate phosphoenolpyruvate. Positions 166, 168, 315, and 342 each coordinate 3-phosphoshikimate. Position 168 (Gln-168) interacts with phosphoenolpyruvate. The active-site Proton acceptor is Asp-315. Arg-346 and Arg-399 together coordinate phosphoenolpyruvate.

This sequence belongs to the EPSP synthase family. In terms of assembly, monomer.

The protein resides in the cytoplasm. It carries out the reaction 3-phosphoshikimate + phosphoenolpyruvate = 5-O-(1-carboxyvinyl)-3-phosphoshikimate + phosphate. Its pathway is metabolic intermediate biosynthesis; chorismate biosynthesis; chorismate from D-erythrose 4-phosphate and phosphoenolpyruvate: step 6/7. In terms of biological role, catalyzes the transfer of the enolpyruvyl moiety of phosphoenolpyruvate (PEP) to the 5-hydroxyl of shikimate-3-phosphate (S3P) to produce enolpyruvyl shikimate-3-phosphate and inorganic phosphate. In Leptospira interrogans serogroup Icterohaemorrhagiae serovar Lai (strain 56601), this protein is 3-phosphoshikimate 1-carboxyvinyltransferase.